A 175-amino-acid polypeptide reads, in one-letter code: Translation initiation factor IF-3 (175 aa).

This sequence belongs to the IF-3 family. Monomer.

It is found in the cytoplasm. In terms of biological role, IF-3 binds to the 30S ribosomal subunit and shifts the equilibrium between 70S ribosomes and their 50S and 30S subunits in favor of the free subunits, thus enhancing the availability of 30S subunits on which protein synthesis initiation begins. This Aquifex aeolicus (strain VF5) protein is Translation initiation factor IF-3.